Consider the following 89-residue polypeptide: Cell division topological specificity factor (89 aa).

Belongs to the MinE family.

In terms of biological role, prevents the cell division inhibition by proteins MinC and MinD at internal division sites while permitting inhibition at polar sites. This ensures cell division at the proper site by restricting the formation of a division septum at the midpoint of the long axis of the cell. This chain is Cell division topological specificity factor, found in Paracoccus denitrificans (strain Pd 1222).